Here is a 251-residue protein sequence, read N- to C-terminus: Astacin (251 aa).

The N-terminal stretch at 1–15 (MQCAVLLVLLGVVAA) is a signal peptide. Residues 16 to 49 (SPIIPEAARALYYNDGMFEGDIKLRAGRQPARVG) constitute a propeptide, activation peptide. Positions 50-248 (AAILGDEYLW…INNLYTNECS (199 aa)) constitute a Peptidase M12A domain. 2 disulfide bridges follow: Cys91-Cys247 and Cys113-Cys133. His141 contacts Zn(2+). Glu142 is a catalytic residue. Positions 145 and 151 each coordinate Zn(2+). A propeptide spanning residues 250-251 (RH) is cleaved from the precursor.

Monomer. Zn(2+) serves as cofactor.

The enzyme catalyses Hydrolysis of peptide bonds in substrates containing five or more amino acids, preferentially with Ala in P1', and Pro in P2'.. Metalloprotease. This protease prefers to cleave in front of small aliphatic residues (P1'). The presence of Lys or Arg in the P1 and P2 position yields high-turnover substrates. In the P3 position the enzyme prefers Pro &gt; Val &gt; Leu &gt; Ala &gt; Gly. This chain is Astacin, found in Astacus astacus (Noble crayfish).